The following is a 975-amino-acid chain: Kinesin-like protein KIN-14K (975 aa).

Positions Met1–Lys40 are disordered. The segment covering Arg17–Ser30 has biased composition (low complexity). Residues Glu31 to Lys40 are compositionally biased toward basic and acidic residues. The 104-residue stretch at Lys40–Ser143 folds into the Calponin-homology (CH) domain. The stretch at Lys289–Leu345 forms a coiled coil. Residues Asn436–Val746 enclose the Kinesin motor domain. Gly520 to Thr527 contributes to the ATP binding site. Residues Gly757–Asn788 adopt a coiled-coil conformation. Disordered stretches follow at residues Val801 to Asp852 and Leu900 to Arg975. The segment covering Leu944 to Lys958 has biased composition (low complexity).

The protein belongs to the TRAFAC class myosin-kinesin ATPase superfamily. Kinesin family. KIN-14 subfamily.

In Arabidopsis thaliana (Mouse-ear cress), this protein is Kinesin-like protein KIN-14K.